We begin with the raw amino-acid sequence, 610 residues long: UvrABC system protein C (610 aa).

Residues 16-94 enclose the GIY-YIG domain; it reads NQPGVYRMYN…IKQYLPKYNV (79 aa). The UVR domain maps to 204 to 239; sequence NQVLSILVEKMEQASRELRFEDAAKARDQIQAIRRV.

This sequence belongs to the UvrC family. In terms of assembly, interacts with UvrB in an incision complex.

The protein resides in the cytoplasm. Functionally, the UvrABC repair system catalyzes the recognition and processing of DNA lesions. UvrC both incises the 5' and 3' sides of the lesion. The N-terminal half is responsible for the 3' incision and the C-terminal half is responsible for the 5' incision. In Vibrio cholerae serotype O1 (strain ATCC 39315 / El Tor Inaba N16961), this protein is UvrABC system protein C.